Here is a 219-residue protein sequence, read N- to C-terminus: tRNA (guanine-N(7)-)-methyltransferase (219 aa).

Residues glutamate 51, glutamate 76, aspartate 103, and aspartate 125 each coordinate S-adenosyl-L-methionine. The active site involves aspartate 125. Substrate contacts are provided by residues lysine 129, aspartate 161, and 199-202; that span reads TRYE.

Belongs to the class I-like SAM-binding methyltransferase superfamily. TrmB family.

The catalysed reaction is guanosine(46) in tRNA + S-adenosyl-L-methionine = N(7)-methylguanosine(46) in tRNA + S-adenosyl-L-homocysteine. Its pathway is tRNA modification; N(7)-methylguanine-tRNA biosynthesis. Its function is as follows. Catalyzes the formation of N(7)-methylguanine at position 46 (m7G46) in tRNA. This chain is tRNA (guanine-N(7)-)-methyltransferase, found in Hyphomonas neptunium (strain ATCC 15444).